The following is a 212-amino-acid chain: Orotate phosphoribosyltransferase (212 aa).

Lysine 26 is a binding site for 5-phospho-alpha-D-ribose 1-diphosphate. 34-35 (FF) is a binding site for orotate. 5-phospho-alpha-D-ribose 1-diphosphate-binding positions include 72 to 73 (YK), arginine 98, lysine 99, lysine 102, histidine 104, and 123 to 131 (DDVISAGTS). Orotate is bound by residues serine 127 and arginine 155.

It belongs to the purine/pyrimidine phosphoribosyltransferase family. PyrE subfamily. Homodimer. Mg(2+) serves as cofactor.

The catalysed reaction is orotidine 5'-phosphate + diphosphate = orotate + 5-phospho-alpha-D-ribose 1-diphosphate. The protein operates within pyrimidine metabolism; UMP biosynthesis via de novo pathway; UMP from orotate: step 1/2. Catalyzes the transfer of a ribosyl phosphate group from 5-phosphoribose 1-diphosphate to orotate, leading to the formation of orotidine monophosphate (OMP). The sequence is that of Orotate phosphoribosyltransferase from Thiobacillus denitrificans (strain ATCC 25259 / T1).